The following is a 296-amino-acid chain: GTPase Era (296 aa).

The Era-type G domain maps to 2-171; the sequence is KAGFIAVVGR…LEALDPYLED (170 aa). Residues 10–17 are G1; sequence GRPNVGKS. 10-17 provides a ligand contact to GTP; the sequence is GRPNVGKS. The interval 36–40 is G2; that stretch reads GTTRD. The segment at 57 to 60 is G3; it reads DTPG. GTP contacts are provided by residues 57–61 and 120–123; these read DTPGI and NKVD. Residues 120–123 form a G4 region; sequence NKVD. Residues 150-152 form a G5 region; it reads ASG. Residues 202-279 enclose the KH type-2 domain; that stretch reads TRDEIPHSVA…YLGLWVKVKD (78 aa).

Belongs to the TRAFAC class TrmE-Era-EngA-EngB-Septin-like GTPase superfamily. Era GTPase family. In terms of assembly, monomer.

It localises to the cytoplasm. The protein localises to the cell inner membrane. Its function is as follows. An essential GTPase that binds both GDP and GTP, with rapid nucleotide exchange. Plays a role in 16S rRNA processing and 30S ribosomal subunit biogenesis and possibly also in cell cycle regulation and energy metabolism. The polypeptide is GTPase Era (Fusobacterium nucleatum subsp. nucleatum (strain ATCC 25586 / DSM 15643 / BCRC 10681 / CIP 101130 / JCM 8532 / KCTC 2640 / LMG 13131 / VPI 4355)).